Here is a 108-residue protein sequence, read N- to C-terminus: UPF0145 protein alr2488 (108 aa).

The protein belongs to the UPF0145 family.

The polypeptide is UPF0145 protein alr2488 (Nostoc sp. (strain PCC 7120 / SAG 25.82 / UTEX 2576)).